We begin with the raw amino-acid sequence, 229 residues long: LexA repressor (229 aa).

A DNA-binding region (H-T-H motif) is located at residues 28–48 (IREIGEALDIRSTNGVNDHLK). Residues Ser147 and Lys184 each act as for autocatalytic cleavage activity in the active site.

Belongs to the peptidase S24 family. In terms of assembly, homodimer.

It catalyses the reaction Hydrolysis of Ala-|-Gly bond in repressor LexA.. Its function is as follows. Represses a number of genes involved in the response to DNA damage (SOS response), including recA and lexA. In the presence of single-stranded DNA, RecA interacts with LexA causing an autocatalytic cleavage which disrupts the DNA-binding part of LexA, leading to derepression of the SOS regulon and eventually DNA repair. The polypeptide is LexA repressor (Anaeromyxobacter dehalogenans (strain 2CP-C)).